Consider the following 128-residue polypeptide: Ribonuclease P protein component (128 aa).

Belongs to the RnpA family. In terms of assembly, consists of a catalytic RNA component (M1 or rnpB) and a protein subunit.

The enzyme catalyses Endonucleolytic cleavage of RNA, removing 5'-extranucleotides from tRNA precursor.. Functionally, RNaseP catalyzes the removal of the 5'-leader sequence from pre-tRNA to produce the mature 5'-terminus. It can also cleave other RNA substrates such as 4.5S RNA. The protein component plays an auxiliary but essential role in vivo by binding to the 5'-leader sequence and broadening the substrate specificity of the ribozyme. The protein is Ribonuclease P protein component of Prochlorococcus marinus (strain NATL1A).